The primary structure comprises 291 residues: Probable cell wall amidase LytH (291 aa).

The N-terminal stretch at Met1 to Asp40 is a signal peptide. Residues Glu41–Asn105 enclose the SH3b domain. The segment at Asp109–Lys146 is disordered. One can recognise a MurNAc-LAA domain in the interval Ile122–Arg286.

This sequence belongs to the N-acetylmuramoyl-L-alanine amidase 3 family.

The protein localises to the secreted. Its function is as follows. Probably involved in cell-wall metabolism. In Staphylococcus saprophyticus subsp. saprophyticus (strain ATCC 15305 / DSM 20229 / NCIMB 8711 / NCTC 7292 / S-41), this protein is Probable cell wall amidase LytH (lytH).